A 307-amino-acid chain; its full sequence is MINKDIYQALQQLIPNEKIKVDEPLKRYTYTKTGGNADFYITPTKNVEVQAVVKYAYQNEIPVTYLGNGSNIIIREGGIRGIVISLLSLDHIEVSDDAIIAGSGAAIIDVSRVARDYALTGLEFACGIPGSIGGAVYMNAGAYGGEVKDCIDYALCVNEQGSLVKLTTKELELDYRNSIIQKEHLVVLEAAFTLAPGKMTEIQAKMDDLTERRESKQPLEYPSCGSVFQRPPGHFAGKLIQDSNLQGHRIGGVEVSTKHAGFMVNVDNGTATDYENLIHYVQKTVKEKFGIELNREVRIIGEHPKES.

In terms of domain architecture, FAD-binding PCMH-type spans 33-197 (TGGNADFYIT…LEAAFTLAPG (165 aa)). The active site involves arginine 176. Serine 226 functions as the Proton donor in the catalytic mechanism. The active site involves glutamate 296.

It belongs to the MurB family. Requires FAD as cofactor.

It is found in the cytoplasm. It catalyses the reaction UDP-N-acetyl-alpha-D-muramate + NADP(+) = UDP-N-acetyl-3-O-(1-carboxyvinyl)-alpha-D-glucosamine + NADPH + H(+). Its pathway is cell wall biogenesis; peptidoglycan biosynthesis. Its function is as follows. Cell wall formation. This is UDP-N-acetylenolpyruvoylglucosamine reductase from Staphylococcus aureus (strain MRSA252).